Here is a 445-residue protein sequence, read N- to C-terminus: Serine--tRNA ligase (445 aa).

Threonine 229 to glutamate 231 serves as a coordination point for L-serine. ATP-binding positions include arginine 260 to glutamate 262 and valine 276. An L-serine-binding site is contributed by glutamate 283. Glutamate 347–serine 350 provides a ligand contact to ATP. Residue serine 383 coordinates L-serine.

It belongs to the class-II aminoacyl-tRNA synthetase family. Type-1 seryl-tRNA synthetase subfamily. As to quaternary structure, homodimer. The tRNA molecule binds across the dimer.

It localises to the cytoplasm. The catalysed reaction is tRNA(Ser) + L-serine + ATP = L-seryl-tRNA(Ser) + AMP + diphosphate + H(+). The enzyme catalyses tRNA(Sec) + L-serine + ATP = L-seryl-tRNA(Sec) + AMP + diphosphate + H(+). It functions in the pathway aminoacyl-tRNA biosynthesis; selenocysteinyl-tRNA(Sec) biosynthesis; L-seryl-tRNA(Sec) from L-serine and tRNA(Sec): step 1/1. Functionally, catalyzes the attachment of serine to tRNA(Ser). Is also able to aminoacylate tRNA(Sec) with serine, to form the misacylated tRNA L-seryl-tRNA(Sec), which will be further converted into selenocysteinyl-tRNA(Sec). The sequence is that of Serine--tRNA ligase from Thermomicrobium roseum (strain ATCC 27502 / DSM 5159 / P-2).